A 175-amino-acid polypeptide reads, in one-letter code: Ribosome maturation factor RimM (175 aa).

A PRC barrel domain is found at 95 to 175 (SEDEFYWREL…RIEVDWDPGF (81 aa)).

It belongs to the RimM family. Binds ribosomal protein uS19.

It localises to the cytoplasm. In terms of biological role, an accessory protein needed during the final step in the assembly of 30S ribosomal subunit, possibly for assembly of the head region. Essential for efficient processing of 16S rRNA. May be needed both before and after RbfA during the maturation of 16S rRNA. It has affinity for free ribosomal 30S subunits but not for 70S ribosomes. The sequence is that of Ribosome maturation factor RimM from Aliivibrio fischeri (strain MJ11) (Vibrio fischeri).